A 207-amino-acid chain; its full sequence is Ribosomal RNA large subunit methyltransferase E (207 aa).

5 residues coordinate S-adenosyl-L-methionine: Gly-56, Trp-58, Asp-76, Asp-94, and Asp-116. Catalysis depends on Lys-156, which acts as the Proton acceptor.

This sequence belongs to the class I-like SAM-binding methyltransferase superfamily. RNA methyltransferase RlmE family.

The protein localises to the cytoplasm. It carries out the reaction uridine(2552) in 23S rRNA + S-adenosyl-L-methionine = 2'-O-methyluridine(2552) in 23S rRNA + S-adenosyl-L-homocysteine + H(+). Its function is as follows. Specifically methylates the uridine in position 2552 of 23S rRNA at the 2'-O position of the ribose in the fully assembled 50S ribosomal subunit. The protein is Ribosomal RNA large subunit methyltransferase E of Desulfatibacillum aliphaticivorans.